Consider the following 121-residue polypeptide: Large ribosomal subunit protein bL12 (121 aa).

This sequence belongs to the bacterial ribosomal protein bL12 family. In terms of assembly, homodimer. Part of the ribosomal stalk of the 50S ribosomal subunit. Forms a multimeric L10(L12)X complex, where L10 forms an elongated spine to which 2 to 4 L12 dimers bind in a sequential fashion. Binds GTP-bound translation factors.

In terms of biological role, forms part of the ribosomal stalk which helps the ribosome interact with GTP-bound translation factors. Is thus essential for accurate translation. The sequence is that of Large ribosomal subunit protein bL12 from Streptococcus uberis (strain ATCC BAA-854 / 0140J).